The chain runs to 448 residues: Eukaryotic translation initiation factor 3 subunit E (448 aa).

One can recognise a PCI domain in the interval 254–423; that stretch reads TDLFFSPAYI…GTVIMNHPPQ (170 aa).

Belongs to the eIF-3 subunit E family. In terms of assembly, component of the eukaryotic translation initiation factor 3 (eIF-3) complex.

The protein resides in the cytoplasm. Its function is as follows. Component of the eukaryotic translation initiation factor 3 (eIF-3) complex, which is involved in protein synthesis of a specialized repertoire of mRNAs and, together with other initiation factors, stimulates binding of mRNA and methionyl-tRNAi to the 40S ribosome. The eIF-3 complex specifically targets and initiates translation of a subset of mRNAs involved in cell proliferation. The sequence is that of Eukaryotic translation initiation factor 3 subunit E (int6) from Emericella nidulans (strain FGSC A4 / ATCC 38163 / CBS 112.46 / NRRL 194 / M139) (Aspergillus nidulans).